Here is a 611-residue protein sequence, read N- to C-terminus: MSFSEKIKSLPDQPGIYQYFDENGKLLYIGKAKSLKKRVKSYFRFNPFRPADNLSPRIYKMISEAKDLNYIVVESENDALILENSLIKQLKPKYNILLRDDKTYPYIYIDLDEPFPMPQITRKVVKGKNIKYFGPFSSGASAILKTIYEEIPLVQSKSCLRSGKACLYHQIGRCLAPCEGKVTSREYMKYVDQAIELIHDKEKILEILNQKMQKYAENLQFEEAAEIRDRIKSIESAEIYSHVDLAKLEDLDIFAVEIFNKKAVVIRIFVRQGKVVASSNSVINSQTVPEIGEIYTRAILEFYSTETPFTSSKILVGDDFEEREWLSQVLSEKFGKKISIITPTTKERKSLIKLAKLNALEVIKNQKENTVLDELKILFNLQNTPYKIEVFDTSHMQGEATVGAMVVWEDGKFKKSDYRHYHLEGKDEYSQMRELLTRRAQSFEKSPPPDLWLIDGGKAQLNLAKEIIDSTGANIDVLAISKEKIDAKAHRAKGKAKDKIYFINEKLKVKSEKLNIDKLELSQSDKRLQFLQMLRDEAHRFAIEFHRKTKRKKDTQIDLLQVKGIGKAKMTKLLNYFGSFDNIKKASFDELKDVLNEKDAKAIKEFFKGQK.

The GIY-YIG domain maps to 12-96 (DQPGIYQYFD…IKQLKPKYNI (85 aa)). Residues 202-237 (EKILEILNQKMQKYAENLQFEEAAEIRDRIKSIESA) form the UVR domain.

Belongs to the UvrC family. As to quaternary structure, interacts with UvrB in an incision complex.

The protein resides in the cytoplasm. In terms of biological role, the UvrABC repair system catalyzes the recognition and processing of DNA lesions. UvrC both incises the 5' and 3' sides of the lesion. The N-terminal half is responsible for the 3' incision and the C-terminal half is responsible for the 5' incision. The chain is UvrABC system protein C from Nautilia profundicola (strain ATCC BAA-1463 / DSM 18972 / AmH).